Reading from the N-terminus, the 449-residue chain is uncharacterized protein (449 aa).

Helical transmembrane passes span 1–21 (MVANLPALFSLGVFVGVILLI), 26–46 (IHLTIAAFLGALILVFTHVIT), 51–71 (IDYISQSYATLALFFGVMVLV), 97–117 (LLMLGVIAITTPICAVLPNAT), 137–157 (FVPILILMVFVANSAGLLTLV), 178–198 (FKLSFMGVLAIVSIVVITPFL), 223–243 (VLMAGGVIITLVLIFFVIGES), 244–264 (LPVPIPPASVALMGACLALLL), 285–305 (LIFFMSIFVIIGSLEKTGVTA), 310–330 (LLAVVVGQNIAFGAIVLVFTV), 340–360 (IPLVVAMVPLLKQYVVNIGFA), 377–397 (VLPLFYAMMFGATLGGNGTLV), and 425–445 (GLPVMAVQLVVAALFVAWLMF).

The protein belongs to the CitM (TC 2.A.11) transporter family.

Its subcellular location is the cell membrane. This is an uncharacterized protein from Synechocystis sp. (strain ATCC 27184 / PCC 6803 / Kazusa).